The following is a 473-amino-acid chain: 3-isopropylmalate dehydratase large subunit (473 aa).

[4Fe-4S] cluster contacts are provided by C351, C414, and C417.

Belongs to the aconitase/IPM isomerase family. LeuC type 1 subfamily. As to quaternary structure, heterodimer of LeuC and LeuD. [4Fe-4S] cluster is required as a cofactor.

It catalyses the reaction (2R,3S)-3-isopropylmalate = (2S)-2-isopropylmalate. It functions in the pathway amino-acid biosynthesis; L-leucine biosynthesis; L-leucine from 3-methyl-2-oxobutanoate: step 2/4. Its function is as follows. Catalyzes the isomerization between 2-isopropylmalate and 3-isopropylmalate, via the formation of 2-isopropylmaleate. This chain is 3-isopropylmalate dehydratase large subunit, found in Acidovorax sp. (strain JS42).